The chain runs to 265 residues: Cytochrome c oxidase subunit 3 (265 aa).

7 consecutive transmembrane segments (helical) span residues 16–36, 41–61, 84–104, 137–157, 162–182, 200–220, and 245–265; these read PWPI…VMYM, GGAT…FVWW, YGSI…FWAS, TPIL…ILAG, AVYA…FQGM, FYLA…FSII, and WHFV…WGGI.

This sequence belongs to the cytochrome c oxidase subunit 3 family. In terms of assembly, component of the cytochrome c oxidase (complex IV, CIV), a multisubunit enzyme composed of a catalytic core of 3 subunits and several supernumerary subunits. The complex exists as a monomer or a dimer and forms supercomplexes (SCs) in the inner mitochondrial membrane with ubiquinol-cytochrome c oxidoreductase (cytochrome b-c1 complex, complex III, CIII).

It is found in the mitochondrion inner membrane. The catalysed reaction is 4 Fe(II)-[cytochrome c] + O2 + 8 H(+)(in) = 4 Fe(III)-[cytochrome c] + 2 H2O + 4 H(+)(out). In terms of biological role, component of the cytochrome c oxidase, the last enzyme in the mitochondrial electron transport chain which drives oxidative phosphorylation. The respiratory chain contains 3 multisubunit complexes succinate dehydrogenase (complex II, CII), ubiquinol-cytochrome c oxidoreductase (cytochrome b-c1 complex, complex III, CIII) and cytochrome c oxidase (complex IV, CIV), that cooperate to transfer electrons derived from NADH and succinate to molecular oxygen, creating an electrochemical gradient over the inner membrane that drives transmembrane transport and the ATP synthase. Cytochrome c oxidase is the component of the respiratory chain that catalyzes the reduction of oxygen to water. Electrons originating from reduced cytochrome c in the intermembrane space (IMS) are transferred via the dinuclear copper A center (CU(A)) of subunit 2 and heme A of subunit 1 to the active site in subunit 1, a binuclear center (BNC) formed by heme A3 and copper B (CU(B)). The BNC reduces molecular oxygen to 2 water molecules using 4 electrons from cytochrome c in the IMS and 4 protons from the mitochondrial matrix. The chain is Cytochrome c oxidase subunit 3 (COX3) from Oenothera berteroana (Bertero's evening primrose).